A 207-amino-acid polypeptide reads, in one-letter code: Recombination protein RecR (207 aa).

The C4-type zinc-finger motif lies at 60–75 (CRRCHNISDSGVCTIC). The region spanning 83-178 (STLCVVENIR…RVSVIARGIA (96 aa)) is the Toprim domain.

It belongs to the RecR family.

Its function is as follows. May play a role in DNA repair. It seems to be involved in an RecBC-independent recombinational process of DNA repair. It may act with RecF and RecO. The protein is Recombination protein RecR of Porphyromonas gingivalis (strain ATCC 33277 / DSM 20709 / CIP 103683 / JCM 12257 / NCTC 11834 / 2561).